A 435-amino-acid chain; its full sequence is Glutamyl-tRNA reductase (435 aa).

Substrate-binding positions include 49–52, Ser109, 114–116, and Gln120; these read TCNR and EGQ. Cys50 serves as the catalytic Nucleophile. 198–203 is a binding site for NADP(+); it reads GAGRMS.

It belongs to the glutamyl-tRNA reductase family. In terms of assembly, homodimer.

It carries out the reaction (S)-4-amino-5-oxopentanoate + tRNA(Glu) + NADP(+) = L-glutamyl-tRNA(Glu) + NADPH + H(+). The protein operates within porphyrin-containing compound metabolism; protoporphyrin-IX biosynthesis; 5-aminolevulinate from L-glutamyl-tRNA(Glu): step 1/2. Its pathway is porphyrin-containing compound metabolism; chlorophyll biosynthesis. In terms of biological role, catalyzes the NADPH-dependent reduction of glutamyl-tRNA(Glu) to glutamate 1-semialdehyde (GSA). The chain is Glutamyl-tRNA reductase from Prochlorococcus marinus (strain MIT 9515).